The following is a 583-amino-acid chain: Probable lysosomal cobalamin transporter (583 aa).

10 helical membrane-spanning segments follow: residues 8–28 (LIWAVYAIVVAILAAVASVFI), 41–61 (VILTCIVAVTTLLATVLLVPV), 95–115 (IVYYFLYSLDALLCLIVIPFI), 145–165 (TVSFLAIVVVLFLVGFFVPVA), 188–208 (ALTFALGLLITIGLCLYVLYT), 312–332 (LLSGVIFSLLALIIWISMLLT), 347–367 (GYILGHINVFNPINWVFVQSA), 375–395 (VIFTLLVLFLFSSSIVGISAV), 418–438 (LLATAMLMLIILALNYSTSMI), and 506–526 (FFGAIFFWAQFAFLGIYLLVM). Residues 541–552 (LDEDAEEAEEES) are compositionally biased toward acidic residues. The disordered stretch occupies residues 541 to 562 (LDEDAEEAEEESLLANTRGRAE).

The protein belongs to the LIMR family. LMBRD1 subfamily.

The protein resides in the lysosome membrane. In terms of biological role, probable lysosomal cobalamin transporter. Required to export cobalamin from lysosomes allowing its conversion to cofactors. This chain is Probable lysosomal cobalamin transporter, found in Aspergillus oryzae (strain ATCC 42149 / RIB 40) (Yellow koji mold).